The chain runs to 419 residues: Histidine--tRNA ligase (419 aa).

It belongs to the class-II aminoacyl-tRNA synthetase family. In terms of assembly, homodimer.

Its subcellular location is the cytoplasm. It carries out the reaction tRNA(His) + L-histidine + ATP = L-histidyl-tRNA(His) + AMP + diphosphate + H(+). The protein is Histidine--tRNA ligase of Caldicellulosiruptor saccharolyticus (strain ATCC 43494 / DSM 8903 / Tp8T 6331).